The sequence spans 134 residues: MTRDQNGTWEMESNENFEGYMKALDIDFATRKIAVRLTQTKVIDQDGDNFKTKTTSTFRNYDVDFTVGVEFDEYTKSLDNRHVKALVTWEGDVLVCVQKGEKENRGWKQWIEGDKLYLELTCGDQVCRQVFKKK.

2 residues coordinate all-trans-retinol: K41 and Q109.

It belongs to the calycin superfamily. Fatty-acid binding protein (FABP) family. Higher expression in adult small intestine and to a much lesser extent in fetal kidney.

Its subcellular location is the cytoplasm. In terms of biological role, intracellular transport of retinol. The protein is Retinol-binding protein 2 (RBP2) of Homo sapiens (Human).